The chain runs to 595 residues: Outer dynein arm-docking complex subunit 3 (595 aa).

The tract at residues 1–69 is disordered; that stretch reads MTSPLCRAAS…RGAGKPSVHS (69 aa). Coiled coils occupy residues 94 to 327 and 385 to 473; these read WNIK…REHL and FAQL…ASKL.

In terms of assembly, component of the outer dynein arm-docking complex along with ODAD1, ODAD2, ODAD4 and CLXN. Interacts with ODAD1. Interacts with PIERCE1 and PIERCE2; the interactions link the outer dynein arms docking complex (ODA-DC) to the internal microtubule inner proteins (MIP) in cilium axoneme.

It localises to the cytoplasm. The protein resides in the cytoskeleton. It is found in the cilium basal body. The protein localises to the microtubule organizing center. Its subcellular location is the centrosome. It localises to the centriole. The protein resides in the cilium axoneme. Functionally, component of the outer dynein arm-docking complex (ODA-DC) that mediates outer dynein arms (ODA) binding onto the doublet microtubule. Involved in mediating assembly of both ODAs and their axonemal docking complex onto ciliary microtubules. The chain is Outer dynein arm-docking complex subunit 3 from Homo sapiens (Human).